Consider the following 131-residue polypeptide: Large ribosomal subunit protein bL19 (131 aa).

Belongs to the bacterial ribosomal protein bL19 family.

Its function is as follows. This protein is located at the 30S-50S ribosomal subunit interface and may play a role in the structure and function of the aminoacyl-tRNA binding site. In Rhodopseudomonas palustris (strain HaA2), this protein is Large ribosomal subunit protein bL19.